Here is a 140-residue protein sequence, read N- to C-terminus: Endoribonuclease YbeY (140 aa).

Zn(2+) is bound by residues His99, His103, and His109.

It belongs to the endoribonuclease YbeY family. The cofactor is Zn(2+).

It localises to the cytoplasm. Functionally, single strand-specific metallo-endoribonuclease involved in late-stage 70S ribosome quality control and in maturation of the 3' terminus of the 16S rRNA. The polypeptide is Endoribonuclease YbeY (Wolinella succinogenes (strain ATCC 29543 / DSM 1740 / CCUG 13145 / JCM 31913 / LMG 7466 / NCTC 11488 / FDC 602W) (Vibrio succinogenes)).